The chain runs to 416 residues: CCA-adding enzyme (416 aa).

Residues serine 42 and lysine 45 each contribute to the ATP site. CTP is bound by residues serine 42 and lysine 45. Residues aspartate 54, aspartate 56, and aspartate 107 each coordinate Mg(2+). ATP is bound by residues histidine 130, lysine 150, and tyrosine 159. CTP-binding residues include histidine 130, lysine 150, and tyrosine 159.

This sequence belongs to the tRNA nucleotidyltransferase/poly(A) polymerase family. Archaeal CCA-adding enzyme subfamily. Homodimer. Requires Mg(2+) as cofactor.

The enzyme catalyses a tRNA precursor + 2 CTP + ATP = a tRNA with a 3' CCA end + 3 diphosphate. It carries out the reaction a tRNA with a 3' CCA end + 2 CTP + ATP = a tRNA with a 3' CCACCA end + 3 diphosphate. In terms of biological role, catalyzes the addition and repair of the essential 3'-terminal CCA sequence in tRNAs without using a nucleic acid template. Adds these three nucleotides in the order of C, C, and A to the tRNA nucleotide-73, using CTP and ATP as substrates and producing inorganic pyrophosphate. tRNA 3'-terminal CCA addition is required both for tRNA processing and repair. Also involved in tRNA surveillance by mediating tandem CCA addition to generate a CCACCA at the 3' terminus of unstable tRNAs. While stable tRNAs receive only 3'-terminal CCA, unstable tRNAs are marked with CCACCA and rapidly degraded. The protein is CCA-adding enzyme of Sulfolobus acidocaldarius (strain ATCC 33909 / DSM 639 / JCM 8929 / NBRC 15157 / NCIMB 11770).